The chain runs to 634 residues: MKFMKIGSKLDSFKTDGNNVRYVENELASDISVDVEGSRFCLHKFPLLSKCACLQKLLSSTDKNNIDDIDISGIPGGPTAFETCAKFCYGMTVTLSAYNVVATRCAAEYLGMHETVEKGNLIYKIDVFLSSSLFRSWKDSIIVLQTTKPFLPLSEDLKLVSLCIDAIATKACVDVSHVEWSYTYNKKKLAEENNGADSIKARDVPHDWWVEDLCELEIDYYKRVIMNIKTKCILGGEVIGEALKAYGYRRLSGFNKGVMEQGDLVKHKTIIETLVWLLPAEKNSVSCGFLLKLLKAVTMVNSGEVVKEQLVRRIGQQLEEASMAELLIKSHQGSETLYDVDLVQKIVMEFMRRDKNSEIEVQDDEDGFEVQEVRKLPGILSEASKLMVAKVIDSYLTEIAKDPNLPASKFIDVAESVTSIPRPAHDALYRAIDMFLKEHPGITKGEKKRMCKLMDCRKLSVEACMHAVQNDRLPLRVVVQVLFFEQVRAAASSGSSTPDLPRGMGRELRSCGTYGSSRSVPTVMEDEWEAVATEEEMRALKSEIAALKLQEESGRKSMDRAGVTAISKIRSLIMSKKIFGKKVQLQSKGGGEKNNGGGGGGSDSSESLGSMNAAEETAKTATPSRNLTRRVSVS.

The BTB domain maps to 29 to 97 (SDISVDVEGS…CYGMTVTLSA (69 aa)). Positions 207 to 488 (DWWVEDLCEL…VQVLFFEQVR (282 aa)) constitute an NPH3 domain. Y429 carries the phosphotyrosine modification. Disordered regions lie at residues 492-517 (SSGSSTPDLPRGMGRELRSCGTYGSS) and 584-634 (QLQS…VSVS). Gly residues predominate over residues 588–602 (KGGGEKNNGGGGGGS). Residues 619-634 (KTATPSRNLTRRVSVS) are compositionally biased toward polar residues.

This sequence belongs to the NPH3 family. In terms of tissue distribution, specifically expressed in the hypophysis and the root meristems in the embryos. Highly expressed in primary root tips and radicles.

Its subcellular location is the cell membrane. The protein localises to the cytoplasm. It is found in the cytosol. It functions in the pathway protein modification; protein ubiquitination. Its function is as follows. May act as a substrate-specific adapter of an E3 ubiquitin-protein ligase complex (CUL3-RBX1-BTB) which mediates the ubiquitination and subsequent proteasomal degradation of target proteins. Plays an essential role in auxin-mediated organogenesis and in root gravitropic responses through the control of PIN proteins (e.g. PIN1 and PIN2) polarity in the root tip endodermal cell layer and in shoot epidermis. Recruited to the plasma membrane by PINs (e.g. PIN1 and PIN2) and, in concert with AGC kinases-mediated (e.g. D6PK and PID) PINs phosphorylation, maintains their polarity through limiting lateral diffusion-based escape. The chain is Phototropic-responsive NPH3 family protein NPY2 from Arabidopsis thaliana (Mouse-ear cress).